The chain runs to 80 residues: U-actitoxin-Avd9b (80 aa).

The signal sequence occupies residues 1–20; the sequence is MNLKVLAVFVLCAILVVVTA. Residues 21-39 constitute a propeptide that is removed on maturation; the sequence is ERRGTETGGYKKDTLQDLK. In terms of domain architecture, ShKT spans 45–80; that stretch reads CFDRYREAACTSDNIRLLCKTSAKYQINCKKSCGLC. 3 disulfide bridges follow: cysteine 45/cysteine 80, cysteine 54/cysteine 73, and cysteine 63/cysteine 77. The tract at residues 68 to 69 is crucial for binding to potassium channels; sequence KY.

It belongs to the sea anemone type 1 potassium channel toxin family. Type 1b subfamily.

The protein resides in the secreted. It is found in the nematocyst. Its function is as follows. Inhibits voltage-gated potassium channels (Kv1/KCNA). The polypeptide is U-actitoxin-Avd9b (Anemonia viridis (Snakelocks anemone)).